We begin with the raw amino-acid sequence, 181 residues long: Regulator of G-protein signaling 5 (181 aa).

The RGS domain occupies 64–180 (SLDKLLQNSY…VRSEFYKELI (117 aa)).

Expressed in heart and muscle.

The protein localises to the cytoplasm. The protein resides in the membrane. Inhibits signal transduction by increasing the GTPase activity of G protein alpha subunits thereby driving them into their inactive GDP-bound form. Binds to G(i)-alpha and G(o)-alpha, but not to G(s)-alpha. The chain is Regulator of G-protein signaling 5 (Rgs5) from Mus musculus (Mouse).